Consider the following 393-residue polypeptide: Na(+)/H(+) antiporter NhaA 1 (393 aa).

Transmembrane regions (helical) follow at residues 23-43, 58-78, 96-116, 126-146, 155-175, 178-198, 224-244, 265-285, 298-318, 334-354, and 367-387; these read AGGVSLMVAAALALIVANSPF, LSLTDWINDALMAVFFLLVGL, MLPGIAAAGGVILPAIIFTAF, GWAVPSATDIAFALGVLSLLG, VFLATLAILDDLAAVVIIAIF, AEISMPYLGGAFAAAIVLFVM, GVHATVAGVVTALMIPLKAAP, VAFIIVPIFGFANAGISFAGL, IMLGLFIGKQLGVFGAAWLAI, LYGVAVLCGIGFTMSIFIGLL, and IGVLAGSGLSAICGYILLRLV.

Belongs to the NhaA Na(+)/H(+) (TC 2.A.33) antiporter family.

The protein localises to the cell inner membrane. The catalysed reaction is Na(+)(in) + 2 H(+)(out) = Na(+)(out) + 2 H(+)(in). In terms of biological role, na(+)/H(+) antiporter that extrudes sodium in exchange for external protons. The sequence is that of Na(+)/H(+) antiporter NhaA 1 from Brucella anthropi (strain ATCC 49188 / DSM 6882 / CCUG 24695 / JCM 21032 / LMG 3331 / NBRC 15819 / NCTC 12168 / Alc 37) (Ochrobactrum anthropi).